The following is a 160-amino-acid chain: Troponin C, skeletal muscle (160 aa).

4 EF-hand domains span residues Glu15–Asn50, Pro51–Glu86, Lys91–Pro126, and Val127–Gln160. Residues Asp28, Asp30, Asp34, Glu39, Asp64, Asp66, Ser68, Thr70, Glu75, Asp104, Asn106, Asp108, Glu115, Asp140, Asn142, Asp144, Lys146, and Glu151 each coordinate Ca(2+).

This sequence belongs to the troponin C family.

Troponin is the central regulatory protein of striated muscle contraction. Tn consists of three components: Tn-I which is the inhibitor of actomyosin ATPase, Tn-T which contains the binding EF-hand for tropomyosin and Tn-C. The binding of calcium to Tn-C abolishes the inhibitory action of Tn on actin filaments. In Anguilla anguilla (European freshwater eel), this protein is Troponin C, skeletal muscle.